The sequence spans 129 residues: UPF0102 protein Clim_0016 (129 aa).

Belongs to the UPF0102 family.

The chain is UPF0102 protein Clim_0016 from Chlorobium limicola (strain DSM 245 / NBRC 103803 / 6330).